A 489-amino-acid polypeptide reads, in one-letter code: Neuropeptide CCHamide-2 receptor (489 aa).

At 1–74 the chain is on the extracellular side; sequence MYASLMDVGQ…DRPETYIVTV (74 aa). Residues Asn-25 and Asn-50 are each glycosylated (N-linked (GlcNAc...) asparagine). A helical transmembrane segment spans residues 75-95; that stretch reads LYTLIFIVGVLGNGTLVIIFF. Topologically, residues 96 to 107 are cytoplasmic; sequence RHRSMRNIPNTY. The helical transmembrane segment at 108-128 threads the bilayer; that stretch reads ILSLALADLLVILVCVPVATI. At 129–143 the chain is on the extracellular side; it reads VYTQESWPFERNMCR. Residues Cys-142 and Cys-225 are joined by a disulfide bond. A helical membrane pass occupies residues 144–164; the sequence is ISEFFKDISIGVSVFTLTALS. Residues 165-184 lie on the Cytoplasmic side of the membrane; it reads GERYCAIVNPLRKLQTKPLT. A helical membrane pass occupies residues 185–205; it reads VFTAVMIWILAILLGMPSVLF. The Extracellular portion of the chain corresponds to 206–235; it reads SDIKSYPVFTATGNMTIEVCSPFRDPEYAK. A glycan (N-linked (GlcNAc...) asparagine) is linked at Asn-219. A helical transmembrane segment spans residues 236–256; that stretch reads FMVAGKALVYYLLPLSIIGAL. Residues 257–293 are Cytoplasmic-facing; it reads YIMMAKRLHMSARNMPGEQQSMQSRTQARARLHVARM. The chain crosses the membrane as a helical span at residues 294-314; it reads VVAFVVVFFICFFPYHVFELW. The Extracellular portion of the chain corresponds to 315–333; the sequence is YHFYPTAEEDFDEFWNVLR. The chain crosses the membrane as a helical span at residues 334–354; sequence IVGFCTSFLNSCVNPVALYCV. Residues 355–489 are Cytoplasmic-facing; that stretch reads SGVFRQHFNR…NRYESGVMRY (135 aa). Residues 438 to 468 are disordered; that stretch reads SFHRQDSMPLQHGNAHGGGAGGGSSGLGAGG. The span at 452-468 shows a compositional bias: gly residues; sequence AHGGGAGGGSSGLGAGG.

Belongs to the G-protein coupled receptor 1 family. Highly expressed in larval brain. Also highly expressed in adult brain with very low levels in larval and adult gut.

It localises to the cell membrane. Its function is as follows. Receptor for the neuropeptide CCHamide-2. The chain is Neuropeptide CCHamide-2 receptor from Drosophila melanogaster (Fruit fly).